Reading from the N-terminus, the 283-residue chain is Small ribosomal subunit protein uS2B (283 aa).

The disordered stretch occupies residues 254–283 (GQVGQSAWDEEGDWNTTGAAQTSDWANTVA). A compositionally biased stretch (polar residues) spans 267–283 (WNTTGAAQTSDWANTVA).

Belongs to the universal ribosomal protein uS2 family. As to quaternary structure, component of the small ribosomal subunit. Mature ribosomes consist of a small (40S) and a large (60S) subunit. The 40S subunit contains about 33 different proteins and 1 molecule of RNA (18S). The 60S subunit contains about 49 different proteins and 3 molecules of RNA (25S, 5.8S and 5S). Interacts with rps21.

It is found in the cytoplasm. Functionally, required for the assembly and/or stability of the 40S ribosomal subunit. Required for the processing of the 20S rRNA-precursor to mature 18S rRNA in a late step of the maturation of 40S ribosomal subunits. This chain is Small ribosomal subunit protein uS2B (rps0b), found in Schizosaccharomyces japonicus (strain yFS275 / FY16936) (Fission yeast).